The chain runs to 47 residues: Delta-actitoxin-Ael1a (47 aa).

3 disulfide bridges follow: cysteine 4/cysteine 44, cysteine 6/cysteine 34, and cysteine 27/cysteine 45.

The protein belongs to the sea anemone sodium channel inhibitory toxin family. Type I subfamily. In terms of tissue distribution, expressed in ectodermal glands. Not expressed in nematocytes.

It localises to the secreted. Functionally, binds specifically to voltage-gated sodium channels (Nav), thereby delaying their inactivation during signal transduction. It strongly stimulates mammalian cardiac muscle contraction. Paralyzes the shore crab (C.maenas) by tetanic contractions after intramuscular injection. The chain is Delta-actitoxin-Ael1a from Anthopleura elegantissima (Green aggregating anemone).